The primary structure comprises 100 residues: A-type ATP synthase subunit F (100 aa).

This sequence belongs to the V-ATPase F subunit family. As to quaternary structure, has multiple subunits with at least A(3), B(3), C, D, E, F, H, I and proteolipid K(x).

The protein localises to the cell membrane. Functionally, component of the A-type ATP synthase that produces ATP from ADP in the presence of a proton gradient across the membrane. This chain is A-type ATP synthase subunit F, found in Methanoregula boonei (strain DSM 21154 / JCM 14090 / 6A8).